The sequence spans 398 residues: Inner membrane protein YjgN (398 aa).

Residues 1–24 (MAQVINEMDVPSHSFVFHGTGERY) lie on the Cytoplasmic side of the membrane. Residues 25 to 45 (FLICVVNVLLTIITLGIYLPW) traverse the membrane as a helical segment. Residues 46–73 (ALMKCKRYLYANMEVNGQRFSYGITGGN) lie on the Periplasmic side of the membrane. The helical transmembrane segment at 74-94 (VFVSCLFFVFFYFAILMTVSA) threads the bilayer. Aspartate 95 is a topological domain (cytoplasmic). Residues 96–116 (MPLVGCVLTLLLLVLLIFMAA) form a helical membrane-spanning segment. Topologically, residues 117–142 (KGLRHQALMTSLNGVRFSFNCSMKGF) are periplasmic. Residues 143–163 (WWVTFFLPILMAIGMGTVFFI) form a helical membrane-spanning segment. Over 164–175 (STKMLPANSSSS) the chain is Cytoplasmic. Residues 176–196 (VIISMVLMAIVGIVSIGIFNG) traverse the membrane as a helical segment. Over 197–228 (TLYSLVMSFLWSNTSFGIHRFKVKLDTTYCIK) the chain is Periplasmic. A helical transmembrane segment spans residues 229-249 (YAILAFLALLPFLAVAGYIIF). At 250–278 (DQILNAYDSSVYANDDIENLQQFMEMQRK) the chain is on the cytoplasmic side. The helical transmembrane segment at 279-299 (MIIAQLIYYFGIAVSTSYLTV) threads the bilayer. Over 300-333 (SLRNHFMSNLSLNDGRIRFRLTLTYHGMLYRMCA) the chain is Periplasmic. The chain crosses the membrane as a helical span at residues 334–354 (LVVISGITGGLAYPLLKIWMI). Residues 355–398 (DWQAKNTYLLGDLDDLPLINKEEQPDKGFLASISRGVMPSLPFL) lie on the Cytoplasmic side of the membrane.

Its subcellular location is the cell inner membrane. The sequence is that of Inner membrane protein YjgN (yjgN) from Escherichia coli (strain K12).